The following is a 710-amino-acid chain: Putative transmembrane protein ORF710 (710 aa).

The signal sequence occupies residues 1 to 33 (MKLDRKKKRLLLKTIFSIVILILPLTFLHPTNS). Transmembrane regions (helical) follow at residues 41–61 (VPIQ…TAPL), 76–95 (YGTL…VVWY), and 689–709 (VAIV…IFAI).

The protein localises to the host membrane. The chain is Putative transmembrane protein ORF710 from Acidianus convivator (ATV).